A 468-amino-acid polypeptide reads, in one-letter code: Glutamate--tRNA ligase (468 aa).

A 'HIGH' region motif is present at residues P8–G18. Zn(2+) is bound by residues C97, C99, C124, and D126. The 'KMSKS' region motif lies at K236 to R240. K239 lines the ATP pocket.

It belongs to the class-I aminoacyl-tRNA synthetase family. Glutamate--tRNA ligase type 1 subfamily. As to quaternary structure, monomer. Zn(2+) is required as a cofactor.

Its subcellular location is the cytoplasm. The enzyme catalyses tRNA(Glu) + L-glutamate + ATP = L-glutamyl-tRNA(Glu) + AMP + diphosphate. Catalyzes the attachment of glutamate to tRNA(Glu) in a two-step reaction: glutamate is first activated by ATP to form Glu-AMP and then transferred to the acceptor end of tRNA(Glu). The chain is Glutamate--tRNA ligase from Francisella tularensis subsp. tularensis (strain SCHU S4 / Schu 4).